The following is a 1020-amino-acid chain: Non-canonical nonribosomal peptide synthetase hkm10 (1020 aa).

The adenylation (A) domain stretch occupies residues 21–419 (QMLEDPDAIA…GRFDHQVKIR (399 aa)). The Carrier domain occupies 526-608 (QDKVPSEGAS…QLAHIVDRNQ (83 aa)). Ser568 carries the O-(pantetheine 4'-phosphoryl)serine modification. Residues 652-894 (LTGATGFVGA…FVPIDYVTST (243 aa)) form a short-chain dehydrogenase/reductase (R) domain region.

Belongs to the NRP synthetase family.

The protein operates within secondary metabolite biosynthesis. Functionally, non-canonical nonribosomal peptide synthetase; part of the gene cluster that mediates the biosynthesis of hancockiamides, an unusual new family of N-cinnamoylated piperazines. The NRPS hkm10 and the NmrA-like reductase hkm9 are proposed to convert two molecules of L-Phe to the intermediary piperazine called xenocockiamide A. Xenocockiamide A is then converted to hancockiamide D via a series of hydroxylations and O-methylations. The tyrosinase hkm6 may catalyze an aromatic hydroxylation, then the 2-oxoglutarate-dependent Fe(II) dioxygenase hkm4 and the FAD-dependent phenol hydroxylase hkm7 may catalyze consecutive hydroxylations to install 2 more hydroxy groups, and the methyltransferase hkm8 probably catalyzes two methylations using 2 molecules of S-adenosyl-L-methionine (SAM). The NRPS hkm11 activates and transfers trans-cinnamate supplied by the PAL hkm12 to hancockiamide D and produces hancockiamide A. NRPS Hkm11 has the flexibility to tolerate the bulky hancockiamide G as a substrate and the absence of the acetyl-transferase hkm3 opens up the opportunity for hkm11 to introduce a second N-cinnamoyl moiety. The cytochrome P450 monooxygenase hkm5 catalyzes the methylenedioxy bridge formation, converting hancockiamide A into hancockiamide G. Hkm5 can also convert hancockiamide B into hancockiamide C, and hancockiamide D into hancockiamide H. The N-acetyltransferase hkm3 finally transfers an acetyl group to 1-N of piperazine, converting hancockiamide A into hancockiamide B and hancockiamide G into hancockiamide C. In Aspergillus hancockii, this protein is Non-canonical nonribosomal peptide synthetase hkm10.